A 422-amino-acid chain; its full sequence is UDP-N-acetylglucosamine 1-carboxyvinyltransferase (422 aa).

Position 22–23 (22–23 (KN)) interacts with phosphoenolpyruvate. Position 95 (Arg95) interacts with UDP-N-acetyl-alpha-D-glucosamine. The Proton donor role is filled by Cys119. A 2-(S-cysteinyl)pyruvic acid O-phosphothioketal modification is found at Cys119. Residues 124–128 (RPIDQ), Asp309, and Val331 contribute to the UDP-N-acetyl-alpha-D-glucosamine site.

It belongs to the EPSP synthase family. MurA subfamily.

It localises to the cytoplasm. It carries out the reaction phosphoenolpyruvate + UDP-N-acetyl-alpha-D-glucosamine = UDP-N-acetyl-3-O-(1-carboxyvinyl)-alpha-D-glucosamine + phosphate. Its pathway is cell wall biogenesis; peptidoglycan biosynthesis. Functionally, cell wall formation. Adds enolpyruvyl to UDP-N-acetylglucosamine. The polypeptide is UDP-N-acetylglucosamine 1-carboxyvinyltransferase (Anaeromyxobacter dehalogenans (strain 2CP-1 / ATCC BAA-258)).